The chain runs to 299 residues: HTH-type transcriptional regulator CrgA (299 aa).

Residues 1-60 (MKTNSEELTVFVQVVESGSFSRAAEQLAMANSAVSRIVKRLEEKLGVNLLNRTTRQLSLT) form the HTH lysR-type domain. Positions 20-39 (FSRAAEQLAMANSAVSRIVK) form a DNA-binding region, H-T-H motif.

Belongs to the LysR transcriptional regulatory family. As to quaternary structure, forms oligomers. Oligomerization is required for DNA binding.

In terms of biological role, involved in the regulation of bacterial adhesion to host epithelial cells. May play a central regulatory role in meningococcal adhesion, particularly in switching from initial adhesion to intimate adhesion by downregulating the bacterial surface structures that hinder this adhesion. During intimate adhesion, negatively regulates the expression of pilC1, encoding a pilus-associated protein, pilE, encoding the pilin, and sia genes, encoding the capsule. Also negatively regulates its own expression. May also regulate other genes that are involved in intimate adhesion. Binds specifically to the promoter region of pilC1 and crgA (both harboring a CREN element), and pilE and sia (both devoid of a CREN element). Acts through interaction with RNA polymerase (RNAP). Interaction with RNAP leads to the production of short abortive transcripts, suggesting that CrgA may act by preventing RNAP from clearing the promoter. This chain is HTH-type transcriptional regulator CrgA, found in Neisseria meningitidis serogroup C (strain 8013).